The chain runs to 344 residues: Phenylalanine--tRNA ligase alpha subunit (344 aa).

A Mg(2+)-binding site is contributed by glutamate 256.

This sequence belongs to the class-II aminoacyl-tRNA synthetase family. Phe-tRNA synthetase alpha subunit type 1 subfamily. Tetramer of two alpha and two beta subunits. Mg(2+) is required as a cofactor.

The protein resides in the cytoplasm. It carries out the reaction tRNA(Phe) + L-phenylalanine + ATP = L-phenylalanyl-tRNA(Phe) + AMP + diphosphate + H(+). The polypeptide is Phenylalanine--tRNA ligase alpha subunit (Anoxybacillus flavithermus (strain DSM 21510 / WK1)).